Here is a 661-residue protein sequence, read N- to C-terminus: Ecdysteroid-phosphate phosphatase (661 aa).

Residues 16-57 enclose the UBA domain; sequence KQDVSPLQILLQMGFRRQRALKALAATGNRSVQLASDWLLTH. One can recognise an SH3 domain in the interval 235-300; the sequence is ANHQVYKVTQ…PAVYTRRTAE (66 aa). Arginine 409 is a catalytic residue. Catalysis depends on histidine 410, which acts as the Tele-phosphohistidine intermediate. Histidine 590 is a catalytic residue.

As to quaternary structure, homodimer. Detected in non-diapause eggs, with highest expression between 2 and 5 days after oviposition. Not detected in other tissues tested.

It is found in the cytoplasm. The protein localises to the cytosol. It catalyses the reaction ecdysone 22-phosphate + H2O = ecdysone + phosphate. It carries out the reaction 20-hydroxyecdysone 22-phosphate + H2O = 20-hydroxyecdysone + phosphate. The enzyme catalyses 2-deoxyecdysone 22-phosphate + H2O = 2-deoxyecdysone + phosphate. The catalysed reaction is O-phospho-L-tyrosyl-[protein] + H2O = L-tyrosyl-[protein] + phosphate. Competitively inhibited by 4-nitrophenyl phosphate (para-nitrophenylphosphate, pNPP). Also inhibited by tungstate, vanadate, and phosphate. Its function is as follows. Steroid phosphatase which catalyzes the conversion of inactive phosphorylated ecdysteroids into their active forms. Shows high activity towards ecdysone 22-phosphate (E22P). Has lower activity towards other ecdysteriod phosphates including 20-hydroxyecdysone 22-phosphate (20E22P) and 2-deoxyecdysone 22-phosphate (2dE22P). Also has protein tyrosine phosphatase activity. In Bombyx mori (Silk moth), this protein is Ecdysteroid-phosphate phosphatase.